We begin with the raw amino-acid sequence, 201 residues long: Twist-related protein 1 (201 aa).

Residues 1–18 (MMQDVSSSPVSPADDSLS) show a composition bias toward low complexity. The segment at 1–106 (MMQDVSSSPV…GGGSPQSYEE (106 aa)) is disordered. A compositionally biased stretch (basic residues) spans 34 to 43 (RGGRKRRSSR). Composition is skewed to gly residues over residues 46-65 (AGGG…GGDE) and 80-100 (GCGG…GGGS). In terms of domain architecture, bHLH spans 109-160 (TQRVMANVRERQRTQSLNEAFAALPKIIPTLPSDKLSKIQTLKLAARYIDFL). The tract at residues 162–190 (QVLQSDELDSKMASYVAHERLSYAFSVWR) is sufficient for transactivation activity.

In terms of assembly, efficient DNA binding requires dimerization with another bHLH protein. Homodimer or heterodimer with E proteins such as TCF3. ID1 binds preferentially to TCF3 but does not interact efficiently with TWIST1 so ID1 levels control the amount of TCF3 available to dimerize with TWIST and thus determine the type of dimer formed.

The protein localises to the nucleus. In terms of biological role, acts as a transcriptional regulator. Inhibits myogenesis by sequestrating E proteins, inhibiting trans-activation by MEF2, and inhibiting DNA-binding by MYOD1 through physical interaction. This interaction probably involves the basic domains of both proteins. Also represses expression of pro-inflammatory cytokines such as TNFA and IL1B. Regulates cranial suture patterning and fusion. Activates transcription as a heterodimer with E proteins. Regulates gene expression differentially, depending on dimer composition. Homodimers induce expression of FGFR2 and POSTN while heterodimers repress FGFR2 and POSTN expression and induce THBS1 expression. Heterodimerization is also required for osteoblast differentiation. Represses the activity of the circadian transcriptional activator: NPAS2-BMAL1 heterodimer. This is Twist-related protein 1 (TWIST1) from Pan troglodytes (Chimpanzee).